A 397-amino-acid polypeptide reads, in one-letter code: MKQITILGSTGSIGTSTLSVIENNPDEFQVLALVAGKNATKMAQQCRAFQPKYAVMSDEKSAGELKQLLANTSCKTEILSGSDAVNEIAALDEADQVMSAITGVAGLKPTLAAIEKGKRILLANKESLITSGRLFFDAVAKYGAKVLPIDSEHNAIYQSLPTGIQDNLGHASLEAHGITSILLTGSGGPFRYTPLDELDAMTPDQACAHPNWSMGRKISVDSATMMNKGLEYIEARYFFNASEAEMEVIIHPQSVIHSMVRYRDGSIIAQIGEPDMRTPIAYSMAYPHRTQSGAKALDFFEIQALEFIRPDYQRYPCLALAIEASQRGQASTTVLNAANEVVVDAFLNEKVKFTDIAKINRKVVEHFDLSEPQSIDDVLEIDKLARLQTQQIIAQIV.

8 residues coordinate NADPH: threonine 10, glycine 11, serine 12, isoleucine 13, glycine 36, lysine 37, asparagine 38, and asparagine 124. 1-deoxy-D-xylulose 5-phosphate is bound at residue lysine 125. Glutamate 126 lines the NADPH pocket. Aspartate 150 contributes to the Mn(2+) binding site. 4 residues coordinate 1-deoxy-D-xylulose 5-phosphate: serine 151, glutamate 152, serine 186, and histidine 209. Glutamate 152 is a binding site for Mn(2+). Glycine 215 is a binding site for NADPH. Serine 222, asparagine 227, lysine 228, and glutamate 231 together coordinate 1-deoxy-D-xylulose 5-phosphate. Glutamate 231 lines the Mn(2+) pocket.

This sequence belongs to the DXR family. As to quaternary structure, homodimer. Mg(2+) serves as cofactor. Requires Mn(2+) as cofactor.

It carries out the reaction 2-C-methyl-D-erythritol 4-phosphate + NADP(+) = 1-deoxy-D-xylulose 5-phosphate + NADPH + H(+). Its pathway is isoprenoid biosynthesis; isopentenyl diphosphate biosynthesis via DXP pathway; isopentenyl diphosphate from 1-deoxy-D-xylulose 5-phosphate: step 1/6. Functionally, catalyzes the NADPH-dependent rearrangement and reduction of 1-deoxy-D-xylulose-5-phosphate (DXP) to 2-C-methyl-D-erythritol 4-phosphate (MEP). This chain is 1-deoxy-D-xylulose 5-phosphate reductoisomerase, found in Proteus mirabilis (strain HI4320).